We begin with the raw amino-acid sequence, 228 residues long: 5'-methylthioadenosine/S-adenosylhomocysteine nucleosidase (228 aa).

Residue Glu-11 is the Proton acceptor of the active site. Substrate contacts are provided by residues Gly-77, Ile-151, and Met-172–Glu-173. Asp-196 acts as the Proton donor in catalysis.

The protein belongs to the PNP/UDP phosphorylase family. MtnN subfamily.

The enzyme catalyses S-adenosyl-L-homocysteine + H2O = S-(5-deoxy-D-ribos-5-yl)-L-homocysteine + adenine. The catalysed reaction is S-methyl-5'-thioadenosine + H2O = 5-(methylsulfanyl)-D-ribose + adenine. It catalyses the reaction 5'-deoxyadenosine + H2O = 5-deoxy-D-ribose + adenine. Its pathway is amino-acid biosynthesis; L-methionine biosynthesis via salvage pathway; S-methyl-5-thio-alpha-D-ribose 1-phosphate from S-methyl-5'-thioadenosine (hydrolase route): step 1/2. Its function is as follows. Catalyzes the irreversible cleavage of the glycosidic bond in both 5'-methylthioadenosine (MTA) and S-adenosylhomocysteine (SAH/AdoHcy) to adenine and the corresponding thioribose, 5'-methylthioribose and S-ribosylhomocysteine, respectively. Also cleaves 5'-deoxyadenosine, a toxic by-product of radical S-adenosylmethionine (SAM) enzymes, into 5-deoxyribose and adenine. This chain is 5'-methylthioadenosine/S-adenosylhomocysteine nucleosidase, found in Staphylococcus aureus (strain bovine RF122 / ET3-1).